We begin with the raw amino-acid sequence, 377 residues long: SH2/SH3 adapter protein Nck1 (377 aa).

At Ala-2 the chain carries N-acetylalanine. Residues 2–61 (AEEVVVVAKFDYVAQQEQELDIKKNERLWLLDDSKSWWRVRNSMNKTGFVPSNYVERKNS) enclose the SH3 1 domain. A phosphoserine mark is found at Ser-85, Ser-91, and Ser-96. Tyr-105 bears the Phosphotyrosine mark. The SH3 2 domain occupies 106–165 (DLNMPAFVKFNYMAEREDELSLIKGTKVIVMEKCSDGWWRGSYNGQIGWFPSNYVTEEGD). Phosphoserine is present on Ser-166. Residues 190-252 (QVLHVVQALY…PKNYVTIMQN (63 aa)) form the SH3 3 domain. Residues 282–376 (WYYGKVTRHQ…GEKLYLVKHL (95 aa)) form the SH2 domain.

Interacts (via SH2 domain and SH3 domain 2) with EGFR. Interacts with PAK1 and SOS1. Interacts (via SH3 domains) with PKN2. Associates with BLNK, PLCG1, VAV1 and NCK1 in a B-cell antigen receptor-dependent fashion. Interacts with SOCS7. This interaction is required for nuclear import. Part of a complex containing PPP1R15B, PP1 and NCK1. Interacts with RALGPS1. Interacts with CAV2 (tyrosine phosphorylated form). Interacts with ADAM15. Interacts with FASLG. Directly interacts with RASA1. Interacts with isoform 4 of MINK1. Interacts with FLT1 (tyrosine phosphorylated). Interacts with KDR (tyrosine phosphorylated). Interacts (via SH2 domain) with EPHB1; activates the JUN cascade to regulate cell adhesion. Interacts with EPHA2. Interacts (via SH2 domain) with PDGFRB (tyrosine phosphorylated). Interacts with the inactive form of EIF2AK2/PKR. Interacts with PTPN1. Interacts with INSR/insulin receptor (in response to insulin stimulation); this interaction may mediate PTPN1 recruitment leading to INSR dephosphorylation. Interacts with CD3E (via Proline-rich sequence); the interaction is ligand dependent but independent of tyrosine kinase activation. Interacts with EGFR. Interacts with IRS1. Phosphorylated on Ser and Tyr residues. Phosphorylated in response to activation of EGFR and FcERI. Phosphorylated by activated PDGFRB.

The protein resides in the cytoplasm. It localises to the endoplasmic reticulum. The protein localises to the nucleus. Functionally, adapter protein which associates with tyrosine-phosphorylated growth factor receptors, such as KDR and PDGFRB, or their cellular substrates. Maintains low levels of EIF2S1 phosphorylation by promoting its dephosphorylation by PP1. Plays a role in the DNA damage response, not in the detection of the damage by ATM/ATR, but for efficient activation of downstream effectors, such as that of CHEK2. Plays a role in ELK1-dependent transcriptional activation in response to activated Ras signaling. Modulates the activation of EIF2AK2/PKR by dsRNA. May play a role in cell adhesion and migration through interaction with ephrin receptors. Also acts as an adpater protein for the T cell receptor complex (TCR-CD3E). Upon ligand engagement, is recruited by CD3E and promotes maturation of the immune synapse and T cell activation. This chain is SH2/SH3 adapter protein Nck1 (Nck1), found in Mus musculus (Mouse).